A 751-amino-acid chain; its full sequence is Semaphorin-3C (751 aa).

Positions 1–21 are cleaved as a signal peptide; that stretch reads MAFQAVCILVGVFVCSTYVKG. Positions 28–511 constitute a Sema domain; it reads RVYLTFDELR…SNEGLAQVSL (484 aa). A glycan (N-linked (GlcNAc...) asparagine) is linked at asparagine 81. A disulfide bridge links cysteine 101 with cysteine 112. N-linked (GlcNAc...) asparagine glycosylation occurs at asparagine 123. 3 disulfides stabilise this stretch: cysteine 130/cysteine 139, cysteine 266/cysteine 378, and cysteine 290/cysteine 338. Asparagine 268 is a glycosylation site (N-linked (GlcNAc...) asparagine). A glycan (N-linked (GlcNAc...) asparagine) is linked at asparagine 465. Cysteines 514 and 532 form a disulfide. Residues 571–655 form the Ig-like C2-type domain; the sequence is AYRNAAEIVQ…TENSFKQTIA (85 aa). N-linked (GlcNAc...) asparagine glycans are attached at residues asparagine 585 and asparagine 586. Cysteine 592 and cysteine 643 form a disulfide bridge. The segment covering 712–731 has biased composition (basic and acidic residues); sequence TRQQHQQGEESQKMRGDYGK. The disordered stretch occupies residues 712–751; it reads TRQQHQQGEESQKMRGDYGKLKALINSRKSRNRRNQLPES.

This sequence belongs to the semaphorin family. Interacts with PLXND1.

It is found in the secreted. Binds to plexin family members and plays an important role in the regulation of developmental processes. Required for normal cardiovascular development during embryogenesis. Functions as attractant for growing axons, and thereby plays an important role in axon growth and axon guidance. The chain is Semaphorin-3C (SEMA3C) from Bos taurus (Bovine).